Reading from the N-terminus, the 267-residue chain is Tryptophan synthase alpha chain (267 aa).

Active-site proton acceptor residues include Glu-49 and Asp-60.

This sequence belongs to the TrpA family. Tetramer of two alpha and two beta chains.

It carries out the reaction (1S,2R)-1-C-(indol-3-yl)glycerol 3-phosphate + L-serine = D-glyceraldehyde 3-phosphate + L-tryptophan + H2O. It functions in the pathway amino-acid biosynthesis; L-tryptophan biosynthesis; L-tryptophan from chorismate: step 5/5. Its function is as follows. The alpha subunit is responsible for the aldol cleavage of indoleglycerol phosphate to indole and glyceraldehyde 3-phosphate. This Salinispora tropica (strain ATCC BAA-916 / DSM 44818 / JCM 13857 / NBRC 105044 / CNB-440) protein is Tryptophan synthase alpha chain.